A 53-amino-acid polypeptide reads, in one-letter code: Rho GTPase-activating protein 6 (53 aa).

It localises to the cytoplasm. In terms of biological role, GTPase activator for the Rho-type GTPases by converting them to an inactive GDP-bound state. Could regulate the interactions of signaling molecules with the actin cytoskeleton. Promotes continuous elongation of cytoplasmic processes during cell motility and simultaneous retraction of the cell body changing the cell morphology. The polypeptide is Rho GTPase-activating protein 6 (arhgap6) (Takifugu rubripes (Japanese pufferfish)).